Consider the following 343-residue polypeptide: Cysteine proteinase 1 (343 aa).

The first 18 residues, 1–18 (MKVILLFVLAVFTVFVSS), serve as a signal peptide directing secretion. A propeptide spans 19–117 (RGIPLEEQSQ…DYLDDEFINS (99 aa)) (activation peptide). 3 disulfides stabilise this stretch: C139-C190, C173-C224, and C279-C332. C142 is a catalytic residue. Residues H286 and N311 contribute to the active site.

Belongs to the peptidase C1 family. Post-translationally, phosphoglycosylated, contains GlcNAc-alpha-1-P-Ser residues.

It localises to the lysosome. Cysteine proteinases 1 and 2 are believed to participate in the breakdown of protein during differentiation of Dictyostelium as a response to starvation. The sequence is that of Cysteine proteinase 1 (cprA) from Dictyostelium discoideum (Social amoeba).